Consider the following 476-residue polypeptide: Monodehydroascorbate reductase 2, peroxisomal (476 aa).

Residues 1 to 3 lie on the Cytoplasmic side of the membrane; it reads MGR. The helical transmembrane segment at 4-24 threads the bilayer; it reads AFVHVILGGGVAAGYAALEFA. FAD-binding positions include 12–15, E40, R47, K52, and 146–147; these read GGVA and RN. Residues 25–447 are Peroxisomal-facing; the sequence is RRGGYSRGEL…GGLALGEKPT (423 aa). NAD(+) is bound by residues 171–177, E195, R201, and G260; that span reads GGYIGME. NADP(+) is bound at residue 173–177; sequence YIGME. Residues R201 and G260 each contribute to the NADP(+) site. D297 is a binding site for FAD. Position 314 to 315 (314 to 315) interacts with NAD(+); it reads EH. 314–315 provides a ligand contact to NADP(+); it reads EH. V316 provides a ligand contact to FAD. Position 320 (R320) interacts with L-ascorbate. Y346 is an FAD binding site. Position 346 (Y346) interacts with NAD(+). Y346 is a binding site for NADP(+). R348 serves as a coordination point for L-ascorbate. Residues 448-468 form a helical membrane-spanning segment; it reads YVWHATAGVIAAASIAAFGYW. Residues 469–476 lie on the Cytoplasmic side of the membrane; sequence YGRKRRRW.

The protein belongs to the FAD-dependent oxidoreductase family. The cofactor is FAD.

It is found in the peroxisome membrane. It catalyses the reaction 2 monodehydro-L-ascorbate radical + NADH + H(+) = 2 L-ascorbate + NAD(+). Catalyzes the conversion of monodehydroascorbate to ascorbate, oxidizing NADH in the process. Ascorbate is a major antioxidant against reactive oxygen species (ROS) and nitric oxide (NO). This Oryza sativa subsp. japonica (Rice) protein is Monodehydroascorbate reductase 2, peroxisomal.